The chain runs to 80 residues: Defensin coprisin (80 aa).

The first 20 residues, 1 to 20 (MAKLIAFALVASLCLSMVLC), serve as a signal peptide directing secretion. The propeptide occupies 21-37 (NPLPEEVQEEGLVRQKR). Disulfide bonds link Cys40/Cys71, Cys57/Cys76, and Cys61/Cys78.

This sequence belongs to the invertebrate defensin family. Type 1 subfamily.

It is found in the secreted. It localises to the target cell membrane. Its function is as follows. Potent broad-spectrum antibacterial peptide against both Gram-positive (B.subtilis, S.epidermidis, and S.aureus) and Gram-negative bacteria (E.coli, S.typhimurium, and P.aeruginosa). Is also active against all antibiotic-resistant bacterial strains tested. Induces apoptosis in C.albicans, but does not disrupt the fungal plasma membrane at all. Acts by permeabilizing the bacterial cell membrane, but not human membranes. Also shows potent anti-inflammatory activities, since it reduces both LPS-induced nitric oxide release and pro-inflammatory cytokine production. Anti-inflammatory activities are initiated by suppressing the binding of LPS to toll-like receptor 4 (TLR4), and subsequently inhibiting the phosphorylation of p38 mitogen-activated protein kinase (MAPK) and nuclear translocation of NF-kB (TNFRSF11A). Does not show hemolytic activity against human erythrocytes. The protein is Defensin coprisin of Copris tripartitus (Dung beetle).